We begin with the raw amino-acid sequence, 223 residues long: Thylakoid lumenal 15.0 kDa protein 2, chloroplastic (223 aa).

The protein resides in the plastid. Its subcellular location is the chloroplast thylakoid lumen. In Arabidopsis thaliana (Mouse-ear cress), this protein is Thylakoid lumenal 15.0 kDa protein 2, chloroplastic.